Consider the following 550-residue polypeptide: Amino acid transporter AVT1D (550 aa).

Residues 1 to 16 (MKLDEEFLHDRDHSFL) show a composition bias toward basic and acidic residues. The interval 1-99 (MKLDEEFLHD…FMPQSSSRRL (99 aa)) is disordered. The segment covering 84 to 99 (TPPSVSFMPQSSSRRL) has biased composition (polar residues). 11 helical membrane-spanning segments follow: residues 164–184 (SVLN…PYAI), 189–209 (WLGL…GVLM), 236–256 (FIIS…YIIM), 264–286 (LFPN…IFAI), 308–328 (SVGG…VGAV), 345–365 (LPVT…FPNI), 375–395 (FPLV…AVAV), 424–444 (VWTA…PIVM), 459–479 (GVSI…ALSV), 481–501 (FFAI…ALIF), and 521–541 (LCIF…YSAI).

This sequence belongs to the amino acid/polyamine transporter 2 family. Amino acid/auxin permease (AAAP) (TC 2.A.18.5) subfamily.

It is found in the membrane. The protein is Amino acid transporter AVT1D of Arabidopsis thaliana (Mouse-ear cress).